A 133-amino-acid polypeptide reads, in one-letter code: MIQKFTNLYVTDNSGAIAVRVFQTYPGNRKIVPVGSIVRHSVKKIHRILPWGKQLRGRRKRIICRSQCGRSWIVQTSYQIPYIDGATLRFSKNRVLLVKRKRGIRIYRGRRIYGLTTRAVNNERTINLFRICI.

The protein belongs to the universal ribosomal protein uL14 family. Probably part of the large ribosomal subunit.

It is found in the hydrogenosome. The polypeptide is Large ribosomal subunit protein uL14m (rpl14) (Nyctotherus ovalis).